Reading from the N-terminus, the 471-residue chain is UDP-N-acetylmuramate--L-alanine ligase (471 aa).

114–120 (GTHGKTT) provides a ligand contact to ATP.

It belongs to the MurCDEF family.

The protein localises to the cytoplasm. It catalyses the reaction UDP-N-acetyl-alpha-D-muramate + L-alanine + ATP = UDP-N-acetyl-alpha-D-muramoyl-L-alanine + ADP + phosphate + H(+). The protein operates within cell wall biogenesis; peptidoglycan biosynthesis. In terms of biological role, cell wall formation. This is UDP-N-acetylmuramate--L-alanine ligase from Rhizobium meliloti (strain 1021) (Ensifer meliloti).